Here is an 857-residue protein sequence, read N- to C-terminus: DNA gyrase subunit A (857 aa).

Residues 39-507 (LPDVRDGLKP…YEGDMSIEDL (469 aa)) enclose the Topo IIA-type catalytic domain. Catalysis depends on Y127, which acts as the O-(5'-phospho-DNA)-tyrosine intermediate. A GyrA-box motif is present at residues 534–540 (QKRGGKG). The segment at 825 to 857 (REAEEVDGDVAVDETAEGAATTGTDEGEAPSAE) is disordered. Residues 828-840 (EEVDGDVAVDETA) show a composition bias toward acidic residues.

The protein belongs to the type II topoisomerase GyrA/ParC subunit family. Heterotetramer, composed of two GyrA and two GyrB chains. In the heterotetramer, GyrA contains the active site tyrosine that forms a transient covalent intermediate with DNA, while GyrB binds cofactors and catalyzes ATP hydrolysis.

The protein localises to the cytoplasm. It carries out the reaction ATP-dependent breakage, passage and rejoining of double-stranded DNA.. Functionally, a type II topoisomerase that negatively supercoils closed circular double-stranded (ds) DNA in an ATP-dependent manner to modulate DNA topology and maintain chromosomes in an underwound state. Negative supercoiling favors strand separation, and DNA replication, transcription, recombination and repair, all of which involve strand separation. Also able to catalyze the interconversion of other topological isomers of dsDNA rings, including catenanes and knotted rings. Type II topoisomerases break and join 2 DNA strands simultaneously in an ATP-dependent manner. This is DNA gyrase subunit A from Streptomyces coelicolor (strain ATCC BAA-471 / A3(2) / M145).